The sequence spans 160 residues: Myosin catalytic light chain LC-1, mantle muscle (160 aa).

X1 bears the Blocked amino end (Xaa) mark. EF-hand domains follow at residues D7–N44, T83–R118, and I119–G153.

In molluscan muscle, calcium regulation is associated with myosin rather than with actin. Muscle myosin contains two types of light chains: the catalytic light chain, essential for ATPase activity, and the regulatory light chain, a calcium-binding protein responsible for Ca(2+) dependent binding and Ca(2+) dependent Mg-ATPase activity. This Todarodes pacificus (Japanese flying squid) protein is Myosin catalytic light chain LC-1, mantle muscle.